The primary structure comprises 966 residues: Alpha-1,4 glucan phosphorylase L-1 isozyme, chloroplastic/amyloplastic (966 aa).

A chloroplast-targeting transit peptide spans 1 to 50; the sequence is MATANGAHLFNHYSSNSRFIHFTSRNTSSKLFLTKTSHFRRPKRCFHVNN. N6-(pyridoxal phosphate)lysine is present on lysine 812.

It belongs to the glycogen phosphorylase family. It depends on pyridoxal 5'-phosphate as a cofactor. In terms of tissue distribution, tuber.

The protein localises to the plastid. It is found in the chloroplast. Its subcellular location is the amyloplast. The enzyme catalyses [(1-&gt;4)-alpha-D-glucosyl](n) + phosphate = [(1-&gt;4)-alpha-D-glucosyl](n-1) + alpha-D-glucose 1-phosphate. Phosphorylase is an important allosteric enzyme in carbohydrate metabolism. Enzymes from different sources differ in their regulatory mechanisms and in their natural substrates. However, all known phosphorylases share catalytic and structural properties. The chain is Alpha-1,4 glucan phosphorylase L-1 isozyme, chloroplastic/amyloplastic from Solanum tuberosum (Potato).